Here is a 110-residue protein sequence, read N- to C-terminus: Protein RALF-like 4 (110 aa).

The signal sequence occupies residues 1 to 23; that stretch reads MGVKMLLIFGLLILAMVAKSVNA. A propeptide spans 24-58 (removed in mature form); the sequence is TYPLTKSCINGQGCIGEDDELESLMDSETNRRQLA. 2 cysteine pairs are disulfide-bonded: C76/C86 and C99/C105.

Belongs to the plant rapid alkalinization factor (RALF) family. Proteolytically cleaved, probably by S1P, a subtilisin-like serine protease (subtilase).

It is found in the secreted. In terms of biological role, cell signaling peptide that may regulate plant stress, growth, and development. Mediates a rapid alkalinization of extracellular space by mediating a transient increase in the cytoplasmic Ca(2+) concentration leading to a calcium-dependent signaling events through a cell surface receptor and a concomitant activation of some intracellular mitogen-activated protein kinases. This chain is Protein RALF-like 4 (RALFL4), found in Arabidopsis thaliana (Mouse-ear cress).